We begin with the raw amino-acid sequence, 151 residues long: UPF0735 ACT domain-containing protein SSP1116 (151 aa).

The ACT domain occupies 74 to 149 (TLILYVNDIV…HVSKVELISM (76 aa)).

It belongs to the UPF0735 family.

The protein is UPF0735 ACT domain-containing protein SSP1116 of Staphylococcus saprophyticus subsp. saprophyticus (strain ATCC 15305 / DSM 20229 / NCIMB 8711 / NCTC 7292 / S-41).